The following is a 180-amino-acid chain: Inner membrane-spanning protein YciB (180 aa).

5 helical membrane-spanning segments follow: residues 22 to 42 (IFVASGALIVATLVALAFTWL), 50 to 70 (MTLVTAAMVLVFGTLTLAFHS), 72 to 92 (LFIKWKVTVLYVLFALALLVS), 121 to 141 (LSWAIFFLVCGLLNIYVAFWL), and 149 to 169 (FKVFGLTALTLIFTLISGVYI).

The protein belongs to the YciB family.

It is found in the cell inner membrane. Functionally, plays a role in cell envelope biogenesis, maintenance of cell envelope integrity and membrane homeostasis. This is Inner membrane-spanning protein YciB from Yersinia pseudotuberculosis serotype O:1b (strain IP 31758).